A 353-amino-acid polypeptide reads, in one-letter code: Beta-hexosaminidase (353 aa).

Substrate is bound by residues Asp74, Arg82, Arg149, and 179–180 (KH). His192 acts as the Proton donor/acceptor in catalysis. Catalysis depends on Asp263, which acts as the Nucleophile.

This sequence belongs to the glycosyl hydrolase 3 family. NagZ subfamily.

The protein localises to the cytoplasm. The enzyme catalyses Hydrolysis of terminal non-reducing N-acetyl-D-hexosamine residues in N-acetyl-beta-D-hexosaminides.. It participates in cell wall biogenesis; peptidoglycan recycling. Its function is as follows. Plays a role in peptidoglycan recycling by cleaving the terminal beta-1,4-linked N-acetylglucosamine (GlcNAc) from peptide-linked peptidoglycan fragments, giving rise to free GlcNAc, anhydro-N-acetylmuramic acid and anhydro-N-acetylmuramic acid-linked peptides. The sequence is that of Beta-hexosaminidase from Bordetella bronchiseptica (strain ATCC BAA-588 / NCTC 13252 / RB50) (Alcaligenes bronchisepticus).